We begin with the raw amino-acid sequence, 740 residues long: 1,4-alpha-glucan branching enzyme GlgB (740 aa).

The active-site Nucleophile is Asp-419. Glu-472 acts as the Proton donor in catalysis.

Belongs to the glycosyl hydrolase 13 family. GlgB subfamily. As to quaternary structure, monomer.

It carries out the reaction Transfers a segment of a (1-&gt;4)-alpha-D-glucan chain to a primary hydroxy group in a similar glucan chain.. It participates in glycan biosynthesis; glycogen biosynthesis. Catalyzes the formation of the alpha-1,6-glucosidic linkages in glycogen by scission of a 1,4-alpha-linked oligosaccharide from growing alpha-1,4-glucan chains and the subsequent attachment of the oligosaccharide to the alpha-1,6 position. This is 1,4-alpha-glucan branching enzyme GlgB from Paramagnetospirillum magneticum (strain ATCC 700264 / AMB-1) (Magnetospirillum magneticum).